Consider the following 2313-residue polypeptide: Cell surface glycoprotein 1 (2313 aa).

The first 28 residues, 1–28 (MKRKNKVLSILLTLLLIISTTSVNMSFA), serve as a signal peptide directing secretion. 2 Cohesin domains span residues 34-197 (IEMV…VVEA) and 205-367 (VALE…EIVV). Over residues 369 to 378 (GEEPGEEPTE) the composition is skewed to acidic residues. Positions 369-400 (GEEPGEEPTEEPVPTETSVDPTPTVTEEPVPS) are disordered. Low complexity predominate over residues 380–400 (PVPTETSVDPTPTVTEEPVPS). Residues 407-569 (VIMELDKTKV…SVVQPGEIVV (163 aa)) form the Cohesin 3 domain. Positions 571 to 580 (GEEPGEEPTE) are enriched in acidic residues. Positions 571–602 (GEEPGEEPTEEPVPTETSVDPTPTVTEEPVPS) are disordered. Positions 582 to 602 (PVPTETSVDPTPTVTEEPVPS) are enriched in low complexity. A Cohesin 4 domain is found at 609 to 771 (VIMELDKTKV…SVVQPGEIVA (163 aa)). A compositionally biased stretch (acidic residues) spans 772–782 (EGEEPGEEPTE). The interval 772-805 (EGEEPGEEPTEEPVPTETSADPTPTVTEEPVPSE) is disordered. Residues 784 to 803 (PVPTETSADPTPTVTEEPVP) are compositionally biased toward low complexity. One can recognise a Cohesin 5 domain in the interval 811–973 (VIMELDKTKV…SVVQPGEIVA (163 aa)). The span at 974 to 984 (EGEEPGEEPTE) shows a compositional bias: acidic residues. A disordered region spans residues 974–1007 (EGEEPGEEPTEEPVPTETPVDPTPTVTEEPVPSE). Residues 986–1007 (PVPTETPVDPTPTVTEEPVPSE) show a composition bias toward low complexity. One can recognise a Cohesin 6 domain in the interval 1013–1175 (VIMELDKTKV…SVVQPGEIVA (163 aa)). 2 disordered regions span residues 1177–1203 (GEEP…EPVP) and 1374–2111 (ASDE…PDGS). Low complexity predominate over residues 1184–1203 (PVPTETPVDPTPTVTEEPVP). Residues 1211–1375 (VIMELDKTKV…IQPAPIKAAS (165 aa)) form the Cohesin 7 domain. Residues 1376–1390 (DEPIPTDTPSDEPTP) show a composition bias toward low complexity. Positions 1383 to 2025 (TPSDEPTPSD…SDEPTPSETP (643 aa)) are approximate tandem repeats of T-P-S-D-E-P. The span at 1391-1411 (SDEPTPSDEPTPSDEPTPSDE) shows a compositional bias: pro residues. The span at 1423–1433 (PTDTPSDEPTP) shows a compositional bias: low complexity. Over residues 1434-1454 (SDEPTPSDEPTPSDEPTPSDE) the composition is skewed to pro residues. Positions 1466-1476 (PTDTPSDEPTP) are enriched in low complexity. A compositionally biased stretch (pro residues) spans 1477–1497 (SDEPTPSDEPTPSDEPTPSDE). Over residues 1509–1519 (PTDTPSDEPTP) the composition is skewed to low complexity. The span at 1520 to 1540 (SDEPTPSDEPTPSDEPTPSDE) shows a compositional bias: pro residues. The span at 1552-1562 (PTDTPSDEPTP) shows a compositional bias: low complexity. Positions 1563–1595 (SDEPTPSDEPTPSDEPTPSDEPTPSDEPTPSDE) are enriched in pro residues. Residues 1607–1617 (PTDTPSDEPTP) are compositionally biased toward low complexity. Residues 1618 to 1650 (SDEPTPSDEPTPSDEPTPSDEPTPSDEPTPSDE) show a composition bias toward pro residues. Positions 1662-1672 (PTDTPSDEPTP) are enriched in low complexity. Residues 1673–1693 (SDEPTPSDEPTPSDEPTPSDE) show a composition bias toward pro residues. Low complexity predominate over residues 1705-1715 (PTDTPSDEPTP). The segment covering 1716-1736 (SDEPTPSDEPTPSDEPTPSDE) has biased composition (pro residues). Low complexity predominate over residues 1748–1758 (PTDTPSDEPTP). The segment covering 1759–1779 (SDEPTPSDEPTPSDEPTPSDE) has biased composition (pro residues). A compositionally biased stretch (low complexity) spans 1791-1801 (PTDTPSDEPTP). Residues 1802-1822 (SDEPTPSDEPTPSDEPTPSDE) are compositionally biased toward pro residues. A compositionally biased stretch (low complexity) spans 1834–1844 (PTDTPSDEPTP). The segment covering 1845 to 1865 (SDEPTPSDEPTPSDEPTPSDE) has biased composition (pro residues). Over residues 1877 to 1887 (PTDTPSDEPTP) the composition is skewed to low complexity. Residues 1888-1908 (SDEPTPSDEPTPSDEPTPSDE) are compositionally biased toward pro residues. The span at 1920–1930 (PTDTPSDEPTP) shows a compositional bias: low complexity. Positions 1931–1963 (SDEPTPSDEPTPSDEPTPSDEPTPSDEPTPSDE) are enriched in pro residues. Over residues 1975 to 1985 (PTDTPSDEPTP) the composition is skewed to low complexity. Composition is skewed to pro residues over residues 1986–2018 (SDEP…PSDE) and 2027–2039 (EPTP…PTPS). Over residues 2045–2062 (GSGGSGGSGGGGGGGGGT) the composition is skewed to gly residues. 3 consecutive SLH domains span residues 2067–2140 (PTPT…YGAQ), 2141–2204 (SASP…EIMS), and 2211–2274 (ISNP…GAPK). The span at 2073–2082 (SKPTSTPAPT) shows a compositional bias: low complexity.

In terms of assembly, assembled into mono-layered crystalline arrays.

The protein resides in the secreted. The protein localises to the cell wall. It localises to the S-layer. The protein is Cell surface glycoprotein 1 (olpB) of Acetivibrio thermocellus (strain ATCC 27405 / DSM 1237 / JCM 9322 / NBRC 103400 / NCIMB 10682 / NRRL B-4536 / VPI 7372) (Clostridium thermocellum).